Consider the following 251-residue polypeptide: Hydroxyacylglutathione hydrolase (251 aa).

Residues His53, His55, Asp57, His58, His110, Asp127, and His165 each coordinate Zn(2+).

This sequence belongs to the metallo-beta-lactamase superfamily. Glyoxalase II family. In terms of assembly, monomer. Requires Zn(2+) as cofactor.

The enzyme catalyses an S-(2-hydroxyacyl)glutathione + H2O = a 2-hydroxy carboxylate + glutathione + H(+). It functions in the pathway secondary metabolite metabolism; methylglyoxal degradation; (R)-lactate from methylglyoxal: step 2/2. Its function is as follows. Thiolesterase that catalyzes the hydrolysis of S-D-lactoyl-glutathione to form glutathione and D-lactic acid. The chain is Hydroxyacylglutathione hydrolase from Escherichia coli O81 (strain ED1a).